A 326-amino-acid polypeptide reads, in one-letter code: Tagatose 1,6-diphosphate aldolase (326 aa).

The protein belongs to the aldolase LacD family.

The enzyme catalyses D-tagatofuranose 1,6-bisphosphate = D-glyceraldehyde 3-phosphate + dihydroxyacetone phosphate. Its pathway is carbohydrate metabolism; D-tagatose 6-phosphate degradation; D-glyceraldehyde 3-phosphate and glycerone phosphate from D-tagatose 6-phosphate: step 2/2. The protein is Tagatose 1,6-diphosphate aldolase of Staphylococcus aureus (strain Mu3 / ATCC 700698).